Consider the following 611-residue polypeptide: Dihydroxy-acid dehydratase (611 aa).

Position 81 (aspartate 81) interacts with Mg(2+). Residue cysteine 122 participates in [2Fe-2S] cluster binding. Aspartate 123 and lysine 124 together coordinate Mg(2+). The residue at position 124 (lysine 124) is an N6-carboxylysine. Position 195 (cysteine 195) interacts with [2Fe-2S] cluster. Glutamate 491 is a binding site for Mg(2+). Serine 517 functions as the Proton acceptor in the catalytic mechanism.

Belongs to the IlvD/Edd family. Homodimer. The cofactor is [2Fe-2S] cluster. Mg(2+) is required as a cofactor.

The catalysed reaction is (2R)-2,3-dihydroxy-3-methylbutanoate = 3-methyl-2-oxobutanoate + H2O. The enzyme catalyses (2R,3R)-2,3-dihydroxy-3-methylpentanoate = (S)-3-methyl-2-oxopentanoate + H2O. The protein operates within amino-acid biosynthesis; L-isoleucine biosynthesis; L-isoleucine from 2-oxobutanoate: step 3/4. Its pathway is amino-acid biosynthesis; L-valine biosynthesis; L-valine from pyruvate: step 3/4. In terms of biological role, functions in the biosynthesis of branched-chain amino acids. Catalyzes the dehydration of (2R,3R)-2,3-dihydroxy-3-methylpentanoate (2,3-dihydroxy-3-methylvalerate) into 2-oxo-3-methylpentanoate (2-oxo-3-methylvalerate) and of (2R)-2,3-dihydroxy-3-methylbutanoate (2,3-dihydroxyisovalerate) into 2-oxo-3-methylbutanoate (2-oxoisovalerate), the penultimate precursor to L-isoleucine and L-valine, respectively. The polypeptide is Dihydroxy-acid dehydratase (Glaesserella parasuis serovar 5 (strain SH0165) (Haemophilus parasuis)).